Consider the following 361-residue polypeptide: Glutaminyl-peptide cyclotransferase (361 aa).

The first 28 residues, 1–28 (MAGCRDPRVVDTLHLLLLVAVLPLAVSG), serve as a signal peptide directing secretion. N-linked (GlcNAc...) asparagine glycosylation occurs at Asn-49. Cys-139 and Cys-164 form a disulfide bridge. Asp-159 serves as a coordination point for Zn(2+). Asn-183 carries an N-linked (GlcNAc...) asparagine glycan. The active-site Proton acceptor is Glu-201. A Zn(2+)-binding site is contributed by Glu-202. Residue Asp-248 is the Proton acceptor of the active site. Zn(2+) is bound at residue His-330.

This sequence belongs to the glutaminyl-peptide cyclotransferase family. Expressed mainly in brain tissue.

Its subcellular location is the secreted. It carries out the reaction N-terminal L-glutaminyl-[peptide] = N-terminal 5-oxo-L-prolyl-[peptide] + NH4(+). Its function is as follows. Responsible for the biosynthesis of pyroglutamyl peptides. Has a bias against acidic and tryptophan residues adjacent to the N-terminal glutaminyl residue and a lack of importance of chain length after the second residue. Also catalyzes N-terminal pyroglutamate formation. The chain is Glutaminyl-peptide cyclotransferase (QPCT) from Bos taurus (Bovine).